Consider the following 134-residue polypeptide: L-ectoine synthase (134 aa).

The protein belongs to the ectoine synthase family.

It catalyses the reaction (2S)-4-acetamido-2-aminobutanoate = L-ectoine + H2O. The protein operates within amine and polyamine biosynthesis; ectoine biosynthesis; L-ectoine from L-aspartate 4-semialdehyde: step 3/3. Catalyzes the circularization of gamma-N-acetyl-alpha,gamma-diaminobutyric acid (ADABA) to ectoine (1,4,5,6-tetrahydro-2-methyl-4-pyrimidine carboxylic acid), which is an excellent osmoprotectant. This Shouchella clausii (strain KSM-K16) (Alkalihalobacillus clausii) protein is L-ectoine synthase.